We begin with the raw amino-acid sequence, 107 residues long: Ig kappa chain V-VI region NQ5-78.2.6 (107 aa).

The interval 1 to 23 (QILLTQSPAIMSASPGQKVTMTC) is framework-1. A disulfide bridge connects residues Cys23 and Cys87. Positions 24–33 (SASSSVSYMH) are complementarity-determining-1. The interval 34–48 (WYQQKSGTSPKRWIY) is framework-2. A complementarity-determining-2 region spans residues 49–55 (DTSKLAS). Residues 56–87 (GVPARFXGSGSATSYSLTITSMQAEDAATYYC) are framework-3. Residues 88–96 (QQWSSNPLT) form a complementarity-determining-3 region. Residues 97-106 (FGSGTKLEXK) form a framework-4 region.

Functionally, anti-2-phenyl oxazolone (PHOX) Antibody. This is Ig kappa chain V-VI region NQ5-78.2.6 from Mus musculus (Mouse).